We begin with the raw amino-acid sequence, 275 residues long: Phosphatidylglycerol--prolipoprotein diacylglyceryl transferase (275 aa).

A run of 3 helical transmembrane segments spans residues 18 to 38 (IEVH…YFIA), 55 to 75 (IIFW…VIFQ), and 89 to 109 (IWHG…TGVI). Position 137 (Arg137) interacts with a 1,2-diacyl-sn-glycero-3-phospho-(1'-sn-glycerol). 2 helical membrane-spanning segments follow: residues 203–223 (IGET…FVEG) and 235–255 (IRVA…MIIY).

It belongs to the Lgt family.

The protein resides in the cell membrane. The enzyme catalyses L-cysteinyl-[prolipoprotein] + a 1,2-diacyl-sn-glycero-3-phospho-(1'-sn-glycerol) = an S-1,2-diacyl-sn-glyceryl-L-cysteinyl-[prolipoprotein] + sn-glycerol 1-phosphate + H(+). The protein operates within protein modification; lipoprotein biosynthesis (diacylglyceryl transfer). Catalyzes the transfer of the diacylglyceryl group from phosphatidylglycerol to the sulfhydryl group of the N-terminal cysteine of a prolipoprotein, the first step in the formation of mature lipoproteins. The chain is Phosphatidylglycerol--prolipoprotein diacylglyceryl transferase from Staphylococcus carnosus (strain TM300).